Consider the following 77-residue polypeptide: Acyl carrier protein (77 aa).

In terms of domain architecture, Carrier spans 2 to 77; that stretch reads ADVLERVTKI…DAVTYIESHL (76 aa). Residue Ser-37 is modified to O-(pantetheine 4'-phosphoryl)serine.

This sequence belongs to the acyl carrier protein (ACP) family. In terms of processing, 4'-phosphopantetheine is transferred from CoA to a specific serine of apo-ACP by AcpS. This modification is essential for activity because fatty acids are bound in thioester linkage to the sulfhydryl of the prosthetic group.

The protein resides in the cytoplasm. It participates in lipid metabolism; fatty acid biosynthesis. Functionally, carrier of the growing fatty acid chain in fatty acid biosynthesis. In Bacillus mycoides (strain KBAB4) (Bacillus weihenstephanensis), this protein is Acyl carrier protein.